Here is a 325-residue protein sequence, read N- to C-terminus: UPF0164 protein TP_0856 (325 aa).

The N-terminal stretch at 1 to 28 (MVHYKSVFYKSAALVCGFVLAGASVAIA) is a signal peptide.

The protein belongs to the UPF0164 family.

This is UPF0164 protein TP_0856 from Treponema pallidum (strain Nichols).